Here is a 305-residue protein sequence, read N- to C-terminus: Elongation factor Ts (305 aa).

The involved in Mg(2+) ion dislocation from EF-Tu stretch occupies residues 79–82 (TDFV).

The protein belongs to the EF-Ts family.

The protein localises to the cytoplasm. Functionally, associates with the EF-Tu.GDP complex and induces the exchange of GDP to GTP. It remains bound to the aminoacyl-tRNA.EF-Tu.GTP complex up to the GTP hydrolysis stage on the ribosome. The polypeptide is Elongation factor Ts (Brucella anthropi (strain ATCC 49188 / DSM 6882 / CCUG 24695 / JCM 21032 / LMG 3331 / NBRC 15819 / NCTC 12168 / Alc 37) (Ochrobactrum anthropi)).